The following is a 429-amino-acid chain: Adenylosuccinate synthetase (429 aa).

GTP contacts are provided by residues 12–18 (GDEGKGK) and 40–42 (GHT). Residue aspartate 13 is the Proton acceptor of the active site. Positions 13 and 40 each coordinate Mg(2+). IMP contacts are provided by residues 13 to 16 (DEGK), 38 to 41 (NAGH), threonine 128, arginine 142, glutamine 223, threonine 238, and arginine 302. The Proton donor role is filled by histidine 41. Residue 298-304 (TTTGRPR) participates in substrate binding. GTP-binding positions include arginine 304, 330 to 332 (SID), and 412 to 414 (SVG).

The protein belongs to the adenylosuccinate synthetase family. In terms of assembly, homodimer. It depends on Mg(2+) as a cofactor.

It is found in the cytoplasm. It carries out the reaction IMP + L-aspartate + GTP = N(6)-(1,2-dicarboxyethyl)-AMP + GDP + phosphate + 2 H(+). It participates in purine metabolism; AMP biosynthesis via de novo pathway; AMP from IMP: step 1/2. Functionally, plays an important role in the de novo pathway of purine nucleotide biosynthesis. Catalyzes the first committed step in the biosynthesis of AMP from IMP. The sequence is that of Adenylosuccinate synthetase from Bacillus thuringiensis (strain Al Hakam).